The following is a 324-amino-acid chain: Protoheme IX farnesyltransferase (324 aa).

Helical transmembrane passes span 31–51 (LIVLFLITTAAGMWVAARGEV), 53–73 (PVLALITLLTGAMAAGSANTI), 104–124 (LVFAIALAVGAFSLQTLCANL), 125–145 (LSACLEMAGIAVYVGVYTHWL), 153–173 (IVIGGAAGAIPPLVGWAAVTG), 181–201 (VLFAIIFIWTPPHFWPLAMLI), 222–242 (TAWQIFGYTLVLLPTTLLLVY), 243–263 (PLHACGLIYGAIALVLGVVFI), and 285–305 (FSILYMMILCAAMGIDSLPLT).

It belongs to the UbiA prenyltransferase family. Protoheme IX farnesyltransferase subfamily.

The protein localises to the cell inner membrane. It carries out the reaction heme b + (2E,6E)-farnesyl diphosphate + H2O = Fe(II)-heme o + diphosphate. Its pathway is porphyrin-containing compound metabolism; heme O biosynthesis; heme O from protoheme: step 1/1. Converts heme B (protoheme IX) to heme O by substitution of the vinyl group on carbon 2 of heme B porphyrin ring with a hydroxyethyl farnesyl side group. The sequence is that of Protoheme IX farnesyltransferase from Cyanothece sp. (strain PCC 7425 / ATCC 29141).